Reading from the N-terminus, the 145-residue chain is MNQTVYLYTDGACKGNPGAGGWGVLMRYGSHEKELFGGEAQTTNNRMELTAVIEGLKSLKRRCTVIICTDSQYVKNGMENWIHGWKRNGWKTASKQPVKNDDLWKELDALVGRHQVSWTWVKGHAGHAENERADDLANRGAAQFS.

Residues 1–142 (MNQTVYLYTD…ADDLANRGAA (142 aa)) enclose the RNase H type-1 domain. Mg(2+) contacts are provided by Asp-10, Glu-48, Asp-70, and Asp-134.

It belongs to the RNase H family. In terms of assembly, monomer. Mg(2+) serves as cofactor.

It is found in the cytoplasm. It carries out the reaction Endonucleolytic cleavage to 5'-phosphomonoester.. Endonuclease that specifically degrades the RNA of RNA-DNA hybrids. The sequence is that of Ribonuclease HI from Neisseria meningitidis serogroup B (strain ATCC BAA-335 / MC58).